A 559-amino-acid polypeptide reads, in one-letter code: Small ribosomal subunit protein bS1 (559 aa).

S1 motif domains lie at 21 to 87 (GSII…LSRE), 105 to 171 (SETV…VSRR), 192 to 260 (GIEI…LGLK), 277 to 347 (GIKL…LGLK), 364 to 434 (GIHV…LGIK), and 451 to 520 (GAII…LTFH).

This sequence belongs to the bacterial ribosomal protein bS1 family.

Functionally, binds mRNA; thus facilitating recognition of the initiation point. It is needed to translate mRNA with a short Shine-Dalgarno (SD) purine-rich sequence. The protein is Small ribosomal subunit protein bS1 (rpsA) of Buchnera aphidicola subsp. Schizaphis graminum (strain Sg).